Consider the following 113-residue polypeptide: Flagellar hook-basal body complex protein FliE (113 aa).

The protein belongs to the FliE family.

Its subcellular location is the bacterial flagellum basal body. This Rhizobium etli (strain CIAT 652) protein is Flagellar hook-basal body complex protein FliE.